Consider the following 201-residue polypeptide: Large ribosomal subunit protein uL4 (201 aa).

The interval 45 to 66 is disordered; that stretch reads AQKSRAEVVGSNKKPWRQKGTG.

Belongs to the universal ribosomal protein uL4 family. As to quaternary structure, part of the 50S ribosomal subunit.

One of the primary rRNA binding proteins, this protein initially binds near the 5'-end of the 23S rRNA. It is important during the early stages of 50S assembly. It makes multiple contacts with different domains of the 23S rRNA in the assembled 50S subunit and ribosome. In terms of biological role, forms part of the polypeptide exit tunnel. In Baumannia cicadellinicola subsp. Homalodisca coagulata, this protein is Large ribosomal subunit protein uL4.